The sequence spans 725 residues: A-agglutinin anchorage subunit (725 aa).

The first 24 residues, 1–24, serve as a signal peptide directing secretion; the sequence is MTLSFAHFTYLFTILLGLTNIALA. 19 repeat units span residues 53–149, 182–188, 189–195, 196–202, 203–209, 210–216, 217–223, 224–230, 231–237, 238–244, 245–251, 252–258, 259–265, 266–272, 273–279, 280–286, 287–293, 294–300, and 301–307. The segment at 53–493 is 2 X approximate repeats; sequence VSTSTIVQAG…TSHSYSSVQT (441 aa). 2 disordered regions span residues 168–318 and 335–363; these read PVTS…TSIS and SSTS…TPSM. The tract at residues 182–307 is 18 X approximate tandem repeats, Ser/Thr-rich; sequence TTTSLSSTST…PSLTSSSPTL (126 aa). The stretch at 395-493 is one 1-2 repeat; it reads MSTYFTTVSG…TSHSYSSVQT (99 aa). Glycine 699 carries the GPI-anchor amidated glycine lipid modification. A propeptide spans 700–725 (removed in mature form); it reads SGSQTRLPLGKLVFAIMAVACNVIFS.

As to quaternary structure, heterodimer; disulfide-linked. Post-translationally, extensively O-glycosylated by PMT1 and PMT2. The GPI-anchor is attached to the protein in the endoplasmic reticulum and serves to target the protein to the cell surface. There, the glucosamine-inositol phospholipid moiety is cleaved off and the GPI-modified mannoprotein is covalently attached via its lipidless GPI glycan remnant to the 1,6-beta-glucan of the outer cell wall layer.

The protein localises to the secreted. The protein resides in the cell wall. It localises to the membrane. Functionally, cell wall anchoring subunit of the a-agglutinin heterodimer. S.cerevisiae a and alpha cells express the complementary cell surface glycoproteins a-agglutinin and alpha-agglutinin, respectively, which interact with one another to promote cellular aggregation during mating. In Saccharomyces cerevisiae (strain ATCC 204508 / S288c) (Baker's yeast), this protein is A-agglutinin anchorage subunit (AGA1).